Reading from the N-terminus, the 189-residue chain is Peptidyl-tRNA hydrolase (189 aa).

TRNA is bound at residue Tyr-15. The active-site Proton acceptor is His-20. Residues Phe-66, Asn-68, and Asn-114 each contribute to the tRNA site.

This sequence belongs to the PTH family. In terms of assembly, monomer.

The protein localises to the cytoplasm. It catalyses the reaction an N-acyl-L-alpha-aminoacyl-tRNA + H2O = an N-acyl-L-amino acid + a tRNA + H(+). In terms of biological role, hydrolyzes ribosome-free peptidyl-tRNAs (with 1 or more amino acids incorporated), which drop off the ribosome during protein synthesis, or as a result of ribosome stalling. Its function is as follows. Catalyzes the release of premature peptidyl moieties from peptidyl-tRNA molecules trapped in stalled 50S ribosomal subunits, and thus maintains levels of free tRNAs and 50S ribosomes. This chain is Peptidyl-tRNA hydrolase, found in Streptococcus mutans serotype c (strain ATCC 700610 / UA159).